Here is a 289-residue protein sequence, read N- to C-terminus: MYG1 protein CT_386 (289 aa).

It belongs to the MYG1 family.

The chain is MYG1 protein CT_386 from Chlamydia trachomatis serovar D (strain ATCC VR-885 / DSM 19411 / UW-3/Cx).